The following is a 496-amino-acid chain: NADP-dependent glyceraldehyde-3-phosphate dehydrogenase (496 aa).

Substrate is bound by residues R116 and 169-170 (NY). 3 residues coordinate NADP(+): K192, T195, and D230. 245 to 249 (GGDTG) contacts NAD(+). The Proton acceptor role is filled by E264. Substrate is bound at residue 297–299 (RCT). C298 functions as the Nucleophile in the catalytic mechanism. E391 is a binding site for NADP(+). Residue R451 coordinates substrate.

Belongs to the aldehyde dehydrogenase family.

The protein resides in the cytoplasm. It carries out the reaction D-glyceraldehyde 3-phosphate + NADP(+) + H2O = (2R)-3-phosphoglycerate + NADPH + 2 H(+). Functionally, important as a means of generating NADPH for biosynthetic reactions. The chain is NADP-dependent glyceraldehyde-3-phosphate dehydrogenase (GAPN) from Nicotiana plumbaginifolia (Leadwort-leaved tobacco).